Reading from the N-terminus, the 338-residue chain is Cell division protein ZipA (338 aa).

Topologically, residues 1-2 (MS) are periplasmic. Residues 3-23 (LREWLIAIGTLVIIGIVIDGV) form a helical membrane-spanning segment. The Cytoplasmic portion of the chain corresponds to 24 to 338 (RRMRRARKES…FERKQRSQRA (315 aa)). Residues 33 to 192 (SMAISSGMGA…RKNQPLAGAN (160 aa)) are disordered. Basic and acidic residues-rich tracts occupy residues 70–81 (TLEDRGYLKRDM) and 138–162 (EVDR…RAEE).

Belongs to the ZipA family. As to quaternary structure, interacts with FtsZ via their C-terminal domains.

Its subcellular location is the cell inner membrane. In terms of biological role, essential cell division protein that stabilizes the FtsZ protofilaments by cross-linking them and that serves as a cytoplasmic membrane anchor for the Z ring. Also required for the recruitment to the septal ring of downstream cell division proteins. The chain is Cell division protein ZipA from Marinobacter nauticus (strain ATCC 700491 / DSM 11845 / VT8) (Marinobacter aquaeolei).